The chain runs to 526 residues: Hyaluronidase-5 (526 aa).

Positions 1–35 (MRVLYFKHSFFRSLLKSNGLPQTLLVFLLIPCYLT) are cleaved as a signal peptide. Cystine bridges form between Cys-60/Cys-351, Cys-223/Cys-237, Cys-376/Cys-387, Cys-381/Cys-435, and Cys-437/Cys-443. Residue Glu-147 is the Proton donor of the active site. N-linked (GlcNAc...) asparagine glycans are attached at residues Asn-165 and Asn-179.

This sequence belongs to the glycosyl hydrolase 56 family. As to expression, expressed in testis, epididymal sperm and epididymides (at protein level). Expressed at highest levels in testis with lesser amounts in epididymal sperm.

It is found in the cell membrane. Its subcellular location is the cytoplasmic vesicle. The protein localises to the secretory vesicle. It localises to the acrosome membrane. The protein resides in the secreted. It carries out the reaction Random hydrolysis of (1-&gt;4)-linkages between N-acetyl-beta-D-glucosamine and D-glucuronate residues in hyaluronate.. Its function is as follows. Catalyzes the hydrolysis of hyaluronan into smaller oligosaccharide fragments. Does not appear to be essential for fertilization. This chain is Hyaluronidase-5, found in Mus musculus (Mouse).